The following is a 254-amino-acid chain: 5-oxoprolinase subunit A (254 aa).

Belongs to the LamB/PxpA family. As to quaternary structure, forms a complex composed of PxpA, PxpB and PxpC.

The enzyme catalyses 5-oxo-L-proline + ATP + 2 H2O = L-glutamate + ADP + phosphate + H(+). Its function is as follows. Catalyzes the cleavage of 5-oxoproline to form L-glutamate coupled to the hydrolysis of ATP to ADP and inorganic phosphate. The chain is 5-oxoprolinase subunit A from Burkholderia orbicola (strain MC0-3).